A 306-amino-acid chain; its full sequence is tRNA dimethylallyltransferase 2 (306 aa).

19–26 contacts ATP; that stretch reads GATASGKT. Substrate is bound at residue 21–26; that stretch reads TASGKT. An interaction with substrate tRNA region spans residues 44–47; sequence DSRQ.

This sequence belongs to the IPP transferase family. In terms of assembly, monomer. Requires Mg(2+) as cofactor.

It catalyses the reaction adenosine(37) in tRNA + dimethylallyl diphosphate = N(6)-dimethylallyladenosine(37) in tRNA + diphosphate. In terms of biological role, catalyzes the transfer of a dimethylallyl group onto the adenine at position 37 in tRNAs that read codons beginning with uridine, leading to the formation of N6-(dimethylallyl)adenosine (i(6)A). The protein is tRNA dimethylallyltransferase 2 of Citrifermentans bemidjiense (strain ATCC BAA-1014 / DSM 16622 / JCM 12645 / Bem) (Geobacter bemidjiensis).